Reading from the N-terminus, the 341-residue chain is Serpentine receptor class beta-1 (341 aa).

7 helical membrane-spanning segments follow: residues 22 to 42 (AQFWTFIFSTLAVPALFIFLL), 66 to 86 (FLFAVVLALTFGYHILVPLFI), 102 to 122 (GQLSLTLFITLQMIMPFGFSI), 141 to 161 (LGPLLIFVLIGIDLILLFTVF), 188 to 208 (CWILLYAELGNLLCNCIILLV), 240 to 260 (LIVSFTHILFIGWYLGVTIFI), and 279 to 299 (GVYISVPTYNLTIVFVGIKAL).

This sequence belongs to the nematode receptor-like protein srb family.

It is found in the membrane. This chain is Serpentine receptor class beta-1 (srb-1), found in Caenorhabditis elegans.